Reading from the N-terminus, the 439-residue chain is Histone acetyltransferase GCN5 (439 aa).

2 stretches are compositionally biased toward basic and acidic residues: residues 1–28 (MVTK…KLEN) and 39–59 (ETNK…KETE). Positions 1–59 (MVTKHQIEEDHLDGATTDPEVKRVKLENNVEEIQPEQAETNKQEGTDKENKGKFEKETE) are disordered. The 156-residue stretch at 100 to 255 (IEFRVVNNDN…GGTLMQCSML (156 aa)) folds into the N-acetyltransferase domain. E173 serves as the catalytic Proton donor/acceptor. Acetyl-CoA contacts are provided by residues 177–179 (CAI), 184–190 (QVRGYGA), and 216–219 (YAIG). The region spanning 327–431 (PKRGPHDAAI…KFFNNKVKEI (105 aa)) is the Bromo domain.

It belongs to the acetyltransferase family. GCN5 subfamily. Component of the 1.8 MDa SAGA (Spt-Ada-Gcn5 acetyltransferase) complex, which is composed of 19 subunits TRA1, SPT7, TAF5, NGG1/ADA3, SGF73, SPT20/ADA5, SPT8, TAF12, TAF6, HFI1/ADA1, UBP8, GCN5, ADA2, SPT3, SGF29, TAF10, TAF9, SGF11 and SUS1. The SAGA complex is composed of 4 modules, namely the HAT (histone acetyltransferase) module (GCN5, ADA2, NGG1/ADA3 and SGF29), the DUB (deubiquitinating) module (UBP8, SGF11, SGF73 and SUS1), the core or TAF (TBP-associated factor) module (TAF5, TAF6, TAF9, TAF10 and TAF12), and the Tra1 or SPT (Suppressor of Ty) module (TRA1, HFI1/ADA1, SPT3, SPT7, SPT8 and SPT20/ADA5). The Tra1/SPT module binds activators, the core module recruits TBP (TATA-binding protein), the HAT module contains the histone H3 acetyltransferase GCN5, and the DUB module comprises the histone H2B deubiquitinase UBP8. Also identified in an altered form of SAGA, named SALSA (SAGA altered, Spt8 absent) or SLIK (SAGA-like) complex, which contains a C-terminal truncated form of SPT7 and is missing SPT8. However, it has been shown that the SAGA and SAGA-like SALSA/SLIK transcriptional coactivators are structurally and biochemically equivalent. Component of the 0.8 MDa ADA complex, a HAT complex distinct from SAGA, which at least consists of ADA2, NGG1/ADA3, AHC1, AHC2, SGF29 and GCN5. Component of an ADA/GCN5 complex that consists of HFI1/ADA1, ADA2, NGG1/ADA3, SPT20/ADA5 and GCN5 and probably is a subcomplex of SAGA.

Its subcellular location is the nucleus. The protein resides in the cytoplasm. The catalysed reaction is L-lysyl-[protein] + acetyl-CoA = N(6)-acetyl-L-lysyl-[protein] + CoA + H(+). It carries out the reaction (2E)-butenoyl-CoA + L-lysyl-[protein] = N(6)-(2E)-butenoyl-L-lysyl-[protein] + CoA + H(+). Functionally, histone acetyltransferase that acetylates histone H2B to form H2BK11ac and H2BK16ac, histone H3 to form H3K9ac, H3K14ac, H3K18ac, H3K23ac, H3K27ac and H3K36ac, with a lower preference histone H4 to form H4K8ac and H4K16ac, and contributes to H2A.Z acetylation. Acetylation of histones gives a specific tag for epigenetic transcription activation and elongation. Operates in concert with certain DNA-binding transcriptional activators such as GCN4 or HAP2/3/4. Its acetyltransferase activity seems to be dependent on the association in different multisubunit complexes. Component of the transcription coactivator SAGA complex. SAGA acts as a general cofactor required for essentially all RNA polymerase II transcription. At the promoters, SAGA is required for transcription pre-initiation complex (PIC) recruitment. It influences RNA polymerase II transcriptional activity through different activities such as TBP interaction (via core/TAF module) and promoter selectivity, interaction with transcription activators (via Tra1/SPT module), and chromatin modification through histone acetylation (via HAT module) and deubiquitination (via DUB module). SAGA preferentially acetylates histones H3 (to form H3K9ac, H3K14ac, H3K18ac and H3K23ac) and H2B and deubiquitinates histone H2B. SAGA interacts with DNA via upstream activating sequences (UASs). Also identified in a modified version of SAGA named SALSA or SLIK. The cleavage of SPT7 and the absence of the SPT8 subunit in SLIK neither drive any major conformational differences in its structure compared with SAGA, nor significantly affect HAT, DUB, or DNA-binding activities. Component of the ADA histone acetyltransferase complex, which preferentially acetylates nucleosomal histones H3 (to form H3K14ac and H3K18ac) and H2B. In addition to histone acetyltransferase, can use different acyl-CoA substrates, such as (2E)-butenoyl-CoA (crotonyl-CoA) and is able to mediate histone crotonylation. Controls the metaphase-to-anaphase transition and is required for correct chromosome segregation and centromere/kinetochore function in mitosis. May be involved in response to DNA damage by genotoxic agents. The sequence is that of Histone acetyltransferase GCN5 from Saccharomyces cerevisiae (strain ATCC 204508 / S288c) (Baker's yeast).